We begin with the raw amino-acid sequence, 244 residues long: Small ribosomal subunit protein uS3 (244 aa).

One can recognise a KH type-2 domain in the interval 39 to 107 (VREMLRKKLA…PAHINVTEVR (69 aa)). The tract at residues 213–244 (VGQEKQDDSPRNDRNDRGDRGDRPSRPAREAR) is disordered. The segment covering 216 to 244 (EKQDDSPRNDRNDRGDRGDRPSRPAREAR) has biased composition (basic and acidic residues).

This sequence belongs to the universal ribosomal protein uS3 family. In terms of assembly, part of the 30S ribosomal subunit. Forms a tight complex with proteins S10 and S14.

Functionally, binds the lower part of the 30S subunit head. Binds mRNA in the 70S ribosome, positioning it for translation. The protein is Small ribosomal subunit protein uS3 of Xanthomonas oryzae pv. oryzae (strain MAFF 311018).